The primary structure comprises 248 residues: 7-cyano-7-deazaguanine synthase (248 aa).

22 to 32 contacts ATP; it reads LSGGLDSTTCL. Zn(2+) contacts are provided by cysteine 216, cysteine 225, cysteine 228, and cysteine 231.

It belongs to the QueC family. The cofactor is Zn(2+).

It carries out the reaction 7-carboxy-7-deazaguanine + NH4(+) + ATP = 7-cyano-7-deazaguanine + ADP + phosphate + H2O + H(+). Its pathway is purine metabolism; 7-cyano-7-deazaguanine biosynthesis. Catalyzes the ATP-dependent conversion of 7-carboxy-7-deazaguanine (CDG) to 7-cyano-7-deazaguanine (preQ(0)). This Leptospira biflexa serovar Patoc (strain Patoc 1 / Ames) protein is 7-cyano-7-deazaguanine synthase.